The chain runs to 225 residues: Cyclin-dependent kinase inhibitor 3 (225 aa).

Disordered regions lie at residues 47-94 and 130-169; these read AAAA…QRRR and ERKS…PLSP. Basic residues predominate over residues 55–67; it reads CRRRHRRGGRRGC. Residues 71-82 show a composition bias toward low complexity; sequence GAGSARACGARS. The span at 143–153 shows a compositional bias: basic and acidic residues; that stretch reads VAAEHAGEHKH.

It belongs to the CDI family. ICK/KRP subfamily.

This is Cyclin-dependent kinase inhibitor 3 (KRP3) from Oryza sativa subsp. japonica (Rice).